The sequence spans 1778 residues: Protein TIC 214 (1778 aa).

6 consecutive transmembrane segments (helical) span residues isoleucine 18–glycine 38, phenylalanine 67–leucine 87, proline 90–asparagine 110, valine 132–leucine 152, valine 175–isoleucine 195, and isoleucine 226–isoleucine 246. The tract at residues glycine 1498–glutamate 1520 is disordered.

It belongs to the TIC214 family. In terms of assembly, part of the Tic complex.

The protein localises to the plastid. It localises to the chloroplast inner membrane. Functionally, involved in protein precursor import into chloroplasts. May be part of an intermediate translocation complex acting as a protein-conducting channel at the inner envelope. The protein is Protein TIC 214 of Arabis hirsuta (Hairy rock-cress).